Here is a 658-residue protein sequence, read N- to C-terminus: DNA-binding protein Rfx5 (658 aa).

Residues 1-10 (MAEDKPDAKS) show a composition bias toward basic and acidic residues. Residues 1 to 28 (MAEDKPDAKSPKTGARPQGGADAGEPTT) form a disordered region. Ala2 is modified (N-acetylalanine). Ser10 carries the post-translational modification Phosphoserine. The segment at 24-89 (GEPTTLLQRL…PSLLSNEEYM (66 aa)) is N-terminal domain. Residues 61-65 (LYLYL) are leucine-rich region; critical for dimer formation and for interaction with RFXAP. The segment at residues 91-167 (AYRWIRNHLE…YCYSGIRRKT (77 aa)) is a DNA-binding region (RFX-type winged-helix). Residues 172–177 (PPLPGL) carry the PxLPxI/L motif; mediates interaction with RFXANK motif. Phosphoserine is present on Ser184. Disordered stretches follow at residues 250–315 (LAEE…SSVP), 382–422 (AGPG…GLGA), 443–602 (VPPR…DKIP), and 624–658 (KGEADAATQGNKGLKGRVLQSSLTPEHKDPKATPP). Residues 277–309 (GPKKPERPAQPPKEQEARAGTDLPGRAERKKSV) are compositionally biased toward basic and acidic residues. Composition is skewed to gly residues over residues 382-398 (AGPGPGPGLGPRFGPGP) and 406-422 (PGLGAGLGPGLGPGLGA). Composition is skewed to basic and acidic residues over residues 465–476 (PRPHDKGIKRTA) and 489–498 (PVKEMKHETQ). The span at 506-516 (KRKRGRPRKKP) shows a compositional bias: basic residues. Residues 648-658 (PEHKDPKATPP) show a composition bias toward basic and acidic residues.

It belongs to the RFX family. In terms of assembly, homodimer. The RFX heterotetrameric complex consists of 2 molecules of RFX5 and one each of RFXAP and RFX-B/RFXANK; with each subunit representing a separate complementation group. Interacts (via PxLPxI/L motif) with RFXANK (via ankyrin repeats); the interaction is direct. RFX forms cooperative DNA binding complexes with X2BP and CBF/NF-Y. RFX associates with CIITA to form an active transcriptional complex. Phosphorylated.

It localises to the nucleus. Its function is as follows. Activates transcription from class II MHC promoters. Recognizes X-boxes. Mediates cooperative binding between RFX and NF-Y. RFX binds the X1 box of MHC-II promoters. This is DNA-binding protein Rfx5 (Rfx5) from Mus musculus (Mouse).